Here is a 388-residue protein sequence, read N- to C-terminus: 4-hydroxy-3-methylbut-2-en-1-yl diphosphate synthase (flavodoxin) (388 aa).

[4Fe-4S] cluster contacts are provided by Cys281, Cys284, Cys316, and Glu323.

The protein belongs to the IspG family. It depends on [4Fe-4S] cluster as a cofactor.

It catalyses the reaction (2E)-4-hydroxy-3-methylbut-2-enyl diphosphate + oxidized [flavodoxin] + H2O + 2 H(+) = 2-C-methyl-D-erythritol 2,4-cyclic diphosphate + reduced [flavodoxin]. It participates in isoprenoid biosynthesis; isopentenyl diphosphate biosynthesis via DXP pathway; isopentenyl diphosphate from 1-deoxy-D-xylulose 5-phosphate: step 5/6. Converts 2C-methyl-D-erythritol 2,4-cyclodiphosphate (ME-2,4cPP) into 1-hydroxy-2-methyl-2-(E)-butenyl 4-diphosphate. The chain is 4-hydroxy-3-methylbut-2-en-1-yl diphosphate synthase (flavodoxin) from Pseudarthrobacter chlorophenolicus (strain ATCC 700700 / DSM 12829 / CIP 107037 / JCM 12360 / KCTC 9906 / NCIMB 13794 / A6) (Arthrobacter chlorophenolicus).